Reading from the N-terminus, the 101-residue chain is MSCYNPCLPCQPCGPTPLANSCNEPCVRQCQSSNVVIEPSSVVVILPGPILSSFPQNTVVGSSTSAAVGSILSCEGVPINSGCFDLSCITSRYCGSRCQPC.

Ser2 is subject to N-acetylserine.

This sequence belongs to the avian keratin family. In terms of assembly, the avian keratins (F-ker, S-ker, C-ker and B-ker) are a complex mixture of very similar polypeptides.

The polypeptide is Feather keratin Cos2-3 (Columba livia (Rock dove)).